The following is a 183-amino-acid chain: ATP synthase subunit delta (183 aa).

This sequence belongs to the ATPase delta chain family. F-type ATPases have 2 components, F(1) - the catalytic core - and F(0) - the membrane proton channel. F(1) has five subunits: alpha(3), beta(3), gamma(1), delta(1), epsilon(1). F(0) has three main subunits: a(1), b(2) and c(10-14). The alpha and beta chains form an alternating ring which encloses part of the gamma chain. F(1) is attached to F(0) by a central stalk formed by the gamma and epsilon chains, while a peripheral stalk is formed by the delta and b chains.

Its subcellular location is the cell inner membrane. In terms of biological role, f(1)F(0) ATP synthase produces ATP from ADP in the presence of a proton or sodium gradient. F-type ATPases consist of two structural domains, F(1) containing the extramembraneous catalytic core and F(0) containing the membrane proton channel, linked together by a central stalk and a peripheral stalk. During catalysis, ATP synthesis in the catalytic domain of F(1) is coupled via a rotary mechanism of the central stalk subunits to proton translocation. Functionally, this protein is part of the stalk that links CF(0) to CF(1). It either transmits conformational changes from CF(0) to CF(1) or is implicated in proton conduction. The sequence is that of ATP synthase subunit delta from Oleidesulfovibrio alaskensis (strain ATCC BAA-1058 / DSM 17464 / G20) (Desulfovibrio alaskensis).